A 574-amino-acid chain; its full sequence is K(+)/H(+) antiporter NhaP2 (574 aa).

A run of 13 helical transmembrane segments spans residues 6 to 26 (INSF…LSPM), 30 to 50 (LGIP…EDGL), 58 to 78 (YSTA…DGGM), 87 to 107 (VALW…TSIT), 109 to 129 (LMAA…GAIV), 173 to 193 (IAIL…VSFI), 196 to 216 (FGLG…LVNL), 219 to 239 (LAEG…YAVS), 242 to 262 (LGGS…NKPT), 271 to 291 (VLDG…GLLL), 299 to 319 (ILLP…PLAV), 335 to 355 (WFIS…VFPM), and 359 to 379 (LPGA…SLLI). The 82-residue stretch at 405 to 486 (SGVEIYPSSE…LDALSHLFSQ (82 aa)) folds into the RCK C-terminal domain.

Belongs to the monovalent cation:proton antiporter 1 (CPA1) transporter (TC 2.A.36) family. NhaP2 subfamily.

It is found in the cell inner membrane. It catalyses the reaction K(+)(in) + H(+)(out) = K(+)(out) + H(+)(in). Functionally, k(+)/H(+) antiporter that extrudes potassium in exchange for external protons and maintains the internal concentration of potassium under toxic levels. This is K(+)/H(+) antiporter NhaP2 from Shewanella sp. (strain W3-18-1).